Here is a 256-residue protein sequence, read N- to C-terminus: Fructose-1,6-bisphosphatase/inositol-1-monophosphatase (256 aa).

4 residues coordinate Mg(2+): glutamate 65, aspartate 79, isoleucine 81, and aspartate 82. Substrate is bound by residues 82–84, arginine 172, alanine 177, and arginine 196; that span reads DGT. Aspartate 201 contacts Mg(2+).

It belongs to the inositol monophosphatase superfamily. FBPase class 4 family. As to quaternary structure, homotetramer. Mg(2+) serves as cofactor.

The enzyme catalyses beta-D-fructose 1,6-bisphosphate + H2O = beta-D-fructose 6-phosphate + phosphate. The catalysed reaction is a myo-inositol phosphate + H2O = myo-inositol + phosphate. In contrast to mammalian I-1-P phosphatases, is only weakly inhibited by Li(+), since 50% inhibitory concentration for Li(+) is about 100 mM, and the Li(+) concentration required to totally abolish I-1-Pase activity is 1 M. Functionally, phosphatase with broad specificity; it can dephosphorylate fructose 1,6-bisphosphate, both D and L isomers of inositol-1-phosphate (I-1-P) but displaying a 20-fold higher rate of hydrolysis of D-I-1-P than of the L isomer, 2'-AMP, pNPP, inositol-2-phosphate, beta-glycerol phosphate, and alpha-D-glucose-1-phosphate. Cannot hydrolyze glucose-6-phosphate, fructose-6-phosphate, 5'-AMP and NAD(+). May be involved in the biosynthesis of a unique osmolyte, di-myo-inositol 1,1-phosphate. The sequence is that of Fructose-1,6-bisphosphatase/inositol-1-monophosphatase (suhB) from Thermotoga maritima (strain ATCC 43589 / DSM 3109 / JCM 10099 / NBRC 100826 / MSB8).